The sequence spans 903 residues: Protein translocase subunit SecA (903 aa).

Residues Gln-87, 105 to 109 (GEGKT), and Asp-513 contribute to the ATP site. The segment covering 840–853 (MEAQRRAQAEEAAR) has biased composition (basic and acidic residues). Residues 840-903 (MEAQRRAQAE…KYKQCHGQIN (64 aa)) form a disordered region. Zn(2+) is bound by residues Cys-887, Cys-889, Cys-898, and His-899.

The protein belongs to the SecA family. In terms of assembly, monomer and homodimer. Part of the essential Sec protein translocation apparatus which comprises SecA, SecYEG and auxiliary proteins SecDF-YajC and YidC. Zn(2+) serves as cofactor.

It is found in the cell inner membrane. It localises to the cytoplasm. It carries out the reaction ATP + H2O + cellular proteinSide 1 = ADP + phosphate + cellular proteinSide 2.. In terms of biological role, part of the Sec protein translocase complex. Interacts with the SecYEG preprotein conducting channel. Has a central role in coupling the hydrolysis of ATP to the transfer of proteins into and across the cell membrane, serving both as a receptor for the preprotein-SecB complex and as an ATP-driven molecular motor driving the stepwise translocation of polypeptide chains across the membrane. This Vibrio cholerae serotype O1 (strain M66-2) protein is Protein translocase subunit SecA.